A 177-amino-acid chain; its full sequence is R-phycoerythrin beta chain (177 aa).

Cys-50 and Cys-61 together coordinate phycourobilin. Asn-72 is subject to N4-methylasparagine. (2R,3E)-phycoerythrobilin contacts are provided by Cys-82 and Cys-158.

Belongs to the phycobiliprotein family. In terms of assembly, heterodimer of an alpha and a beta chain. In terms of processing, contains two covalently linked phycoerythrobilin chromophores and one covalently linked phycourobilin chromophore.

It is found in the plastid. It localises to the chloroplast thylakoid membrane. Its function is as follows. Light-harvesting photosynthetic bile pigment-protein from the phycobiliprotein complex. This Pyropia haitanensis (Red seaweed) protein is R-phycoerythrin beta chain (cpeB).